The sequence spans 547 residues: Chaperonin GroEL (547 aa).

ATP contacts are provided by residues 30-33, lysine 51, 87-91, glycine 415, and aspartate 495; these read TLGP and DGTTT.

It belongs to the chaperonin (HSP60) family. Forms a cylinder of 14 subunits composed of two heptameric rings stacked back-to-back. Interacts with the co-chaperonin GroES.

The protein localises to the cytoplasm. It carries out the reaction ATP + H2O + a folded polypeptide = ADP + phosphate + an unfolded polypeptide.. In terms of biological role, together with its co-chaperonin GroES, plays an essential role in assisting protein folding. The GroEL-GroES system forms a nano-cage that allows encapsulation of the non-native substrate proteins and provides a physical environment optimized to promote and accelerate protein folding. The polypeptide is Chaperonin GroEL (Ralstonia nicotianae (strain ATCC BAA-1114 / GMI1000) (Ralstonia solanacearum)).